The chain runs to 914 residues: WAG22 antigen (914 aa).

Positions 1 to 93 constitute a PE domain; sequence MSFVIAVPET…GGAYAAAEAA (93 aa). Disordered stretches follow at residues 412–431 and 895–914; these read GGSGGAGGSGGPAGTAAGGA and AGAGGAGGLVLGRDGQHGLT. A compositionally biased stretch (gly residues) spans 895 to 904; the sequence is AGAGGAGGLV.

The protein belongs to the mycobacterial PE family. PGRS subfamily.

The sequence is that of WAG22 antigen (wag22) from Mycobacterium bovis (strain ATCC BAA-935 / AF2122/97).